Consider the following 169-residue polypeptide: 3-hydroxyacyl-[acyl-carrier-protein] dehydratase FabZ (169 aa).

His-74 is an active-site residue.

The protein belongs to the thioester dehydratase family. FabZ subfamily.

It is found in the cytoplasm. It catalyses the reaction a (3R)-hydroxyacyl-[ACP] = a (2E)-enoyl-[ACP] + H2O. In terms of biological role, involved in unsaturated fatty acids biosynthesis. Catalyzes the dehydration of short chain beta-hydroxyacyl-ACPs and long chain saturated and unsaturated beta-hydroxyacyl-ACPs. In Gluconobacter oxydans (strain 621H) (Gluconobacter suboxydans), this protein is 3-hydroxyacyl-[acyl-carrier-protein] dehydratase FabZ.